Here is a 247-residue protein sequence, read N- to C-terminus: Cytochrome c oxidase subunit 2 (247 aa).

Residues 1 to 38 are Mitochondrial intermembrane-facing; sequence MKEMMMSNMFNDVPTPWAMFFQDSATPNMEGMLELHNN. Residues 39–58 traverse the membrane as a helical segment; sequence VVFYLCMMLGFVTFMLYNML. The Mitochondrial matrix segment spans residues 59-78; the sequence is TTYNKSVMPYKYLNQGQFME. The helical transmembrane segment at 79-103 threads the bilayer; it reads MMWTTLPAVMLLMIAFPSFILLYMC. Residues 104-247 lie on the Mitochondrial intermembrane side of the membrane; sequence DEVMAPAMTI…ADFLAWIDEQ (144 aa). Residues His-182, Cys-217, Glu-219, Cys-221, His-225, and Met-228 each contribute to the Cu cation site. Residue Glu-219 participates in Mg(2+) binding.

This sequence belongs to the cytochrome c oxidase subunit 2 family. As to quaternary structure, component of the cytochrome c oxidase (complex IV, CIV), a multisubunit enzyme composed of a catalytic core of 3 subunits and several supernumerary subunits. The complex exists as a monomer or a dimer and forms supercomplexes (SCs) in the inner mitochondrial membrane with ubiquinol-cytochrome c oxidoreductase (cytochrome b-c1 complex, complex III, CIII). The cofactor is Cu cation.

Its subcellular location is the mitochondrion inner membrane. It carries out the reaction 4 Fe(II)-[cytochrome c] + O2 + 8 H(+)(in) = 4 Fe(III)-[cytochrome c] + 2 H2O + 4 H(+)(out). Functionally, component of the cytochrome c oxidase, the last enzyme in the mitochondrial electron transport chain which drives oxidative phosphorylation. The respiratory chain contains 3 multisubunit complexes succinate dehydrogenase (complex II, CII), ubiquinol-cytochrome c oxidoreductase (cytochrome b-c1 complex, complex III, CIII) and cytochrome c oxidase (complex IV, CIV), that cooperate to transfer electrons derived from NADH and succinate to molecular oxygen, creating an electrochemical gradient over the inner membrane that drives transmembrane transport and the ATP synthase. Cytochrome c oxidase is the component of the respiratory chain that catalyzes the reduction of oxygen to water. Electrons originating from reduced cytochrome c in the intermembrane space (IMS) are transferred via the dinuclear copper A center (CU(A)) of subunit 2 and heme A of subunit 1 to the active site in subunit 1, a binuclear center (BNC) formed by heme A3 and copper B (CU(B)). The BNC reduces molecular oxygen to 2 water molecules using 4 electrons from cytochrome c in the IMS and 4 protons from the mitochondrial matrix. This chain is Cytochrome c oxidase subunit 2 (COX2), found in Brettanomyces custersianus (Yeast).